The primary structure comprises 2690 residues: Non-reducing polyketide synthase pigA (2690 aa).

One can recognise a Starter acyltransferase (SAT) domain in the interval 96–211 (NILLSPLVVI…AELSRVLQDF (116 aa)). Cysteine 140 acts as the Nucleophile; for transacylase activity in catalysis. The Proton donor/acceptor; for transacylase activity role is filled by histidine 258. In terms of domain architecture, Ketosynthase family 3 (KS3) spans 388–804 (ENDIAVIGMS…GSNASLIVTQ (417 aa)). Active-site for beta-ketoacyl synthase activity residues include cysteine 553, histidine 688, and histidine 727. The Malonyl-CoA:ACP transacylase (MAT) domain maps to 915–1182 (FGGQISTFVG…VQRLAKQHPS (268 aa)). The interval 1296–1426 (LTFVGYQDKD…GKVFFRSVDD (131 aa)) is N-terminal hotdog fold. The PKS/mFAS DH domain occupies 1296–1602 (LTFVGYQDKD…YAKVPKMSMS (307 aa)). Positions 1323–1600 (LVSGHLIAQT…INYAKVPKMS (278 aa)) are product template (PT) domain. Catalysis depends on histidine 1327, which acts as the Proton acceptor; for dehydratase activity. Positions 1454-1602 (ADDIIQGRNI…YAKVPKMSMS (149 aa)) are C-terminal hotdog fold. Catalysis depends on aspartate 1510, which acts as the Proton donor; for dehydratase activity. The region spanning 1657-1731 (PDISGKVRAM…GLLRCIQEAL (75 aa)) is the Carrier 1 domain. Serine 1691 carries the post-translational modification O-(pantetheine 4'-phosphoryl)serine. Positions 1731 to 1764 (LGPSEGVEEETDNEEGEDGESSENPSVFTPSDAA) are disordered. Acidic residues predominate over residues 1736–1751 (GVEEETDNEEGEDGES). The segment covering 1755 to 1764 (PSVFTPSDAA) has biased composition (polar residues). The region spanning 1768 to 1842 (SSAKADVAEF…EFDVKVNGKS (75 aa)) is the Carrier 2 domain. Serine 1802 bears the O-(pantetheine 4'-phosphoryl)serine mark. A methyltransferase domain region spans residues 1948–2255 (QTLERIKYLP…EVNIQRIFLA (308 aa)). The 245-residue stretch at 2320-2564 (VTGATGSLGS…LSWTPVNDVA (245 aa)) folds into the Thioester reductase (TE) domain.

Pantetheine 4'-phosphate serves as cofactor.

The protein operates within secondary metabolite biosynthesis. In terms of biological role, non-reducing polyketide synthase; part of the gene cluster that mediates the biosynthesis of azaphilone pigments (MonAzPs), a complex mixture of compounds with a common azaphilone skeleton very widely used as food colorants. PigA catalyzes the first step of MonAzPs biosynthesis and forms the hexaketide precursor from successive condensations of five malonyl-CoA units, with a simple acetyl-CoA starter unit. The starter acyl transferase (SAT) domain of pigA selects an acetyl-CoA starter unit, and the ketoacyl synthase (KS)-acyl transferase (AT)-acyl carrier protein (ACP) domains extend this starter unit five times with malonyl-CoA in five successive decarboxylative Claisen condensation cycles. The methyltransferase (MT) domain conducts a single C-methylation at C-4, most likely at the pentaketide stage. The reactive hexaketide chain then undergoes a product template (PT) domain-mediated C-2 to C-7 aldol cyclization to afford the first aromatic ring, followed by reductive release of the first pathway intermediate by the NADPH-dependent reductive release (R) domain. The role of esterase pigG is not clear, but it may play at most a supplementary role in the formation of the benzaldehyde produced by the pigA nrPKS. This very reactive benzaldehyde is intercepted by the pigC ketoreductase that to provide the first stable enzyme-free MonAzPs intermediate, 6-(4-hydroxy-2-oxopentyl)-3-methyl-2,4-dioxocyclohexane carbaldehyde, also known as M7PKS-1. The FAD-dependent monooxygenase pigN hydroxylates M7PKS-1 at C-4, which triggers the formation of the pyran ring. PigJ, pigK and pigD are involved in the acetylation of the pyran ring. PigJ and pigK form the two subunits of a dedicated fungal FAS that produces the side chain fatty acyl moiety of MonAzPs and pigD transfers the fatty acyl chain to the C-4 alcohol. PigM and pigO are involved in the elimination of the omega-1 alcohol. PigM acts as an O-acetyltransferase that synthesizes the putative O-11 acetyl intermediate whereas pigO eliminates acetic acid to yield an intermediate with a C10(11) double bond. The dehydration of the C-11 alcohol followed by the reduction of the C6(7) double bond by the NAD(P)H-dependent oxidoreductase pigE increases the electrophilicity of the C-5 ketone of the resulting acyl benzopyran. This in turn sets up the C-5 ketone for an intramolecular Knoevenagel aldol condensation with the C-20 enol of the side chain. This condensation affords the characteristic linear tricyclic carbon skeletons of the yellow pigments that serve as the common precursors for the classical yellow pigments monascin and ankaflavin, orange pigments rubopunctatin and monascorubrin, and red pigments ribropunctamine and monascorubramine. The FAD-dependent oxidoreductase pigF is especially invoved in the biosynthesis of orange and red pigments via desaturation of C6(7). The chain is Non-reducing polyketide synthase pigA from Monascus ruber (Mold).